A 478-amino-acid chain; its full sequence is Proton-coupled amino acid transporter 2 (478 aa).

Polar residues-rich tracts occupy residues 1 to 14 and 26 to 37; these read MSVT…QVAT and KLQSQDPSPANG. The disordered stretch occupies residues 1–46; that stretch reads MSVTKSARSPQVATPLNLDLPESAKKLQSQDPSPANGSSSESSKKT. Residues 1–53 are Cytoplasmic-facing; that stretch reads MSVTKSARSPQVATPLNLDLPESAKKLQSQDPSPANGSSSESSKKTKGITGFQ. A helical transmembrane segment spans residues 54-74; the sequence is TLVHLVKGNMGTGILGLPLAV. The Extracellular portion of the chain corresponds to 75 to 76; that stretch reads KN. The helical transmembrane segment at 77-97 threads the bilayer; that stretch reads AGILMGPLSLLVMGLIACHCM. Residues 98-143 are Cytoplasmic-facing; it reads HILVRCAQRFCHRLNKPFMDYGDTVMHGLAFSPNAWLQNHAHWGRR. Residues 144–164 form a helical membrane-spanning segment; it reads VVSFFLIVTQLGFCCVYIVFL. Topologically, residues 165–192 are extracellular; the sequence is ADNLKQVVEAVNSTTISCHKNETVVLTP. The chain crosses the membrane as a helical span at residues 193-213; the sequence is TMDSRLYMLSFLPVLGLLVFV. The Cytoplasmic portion of the chain corresponds to 214–217; sequence RNLR. Residues 218–238 form a helical membrane-spanning segment; that stretch reads VLTIFSLLANISMLVSLVIIA. Residues 239 to 259 are Extracellular-facing; sequence QYIIQEIPDASQLPLVASWKT. A helical transmembrane segment spans residues 260-280; it reads YPLFFGTAIFSFESIGVVLPL. The Cytoplasmic portion of the chain corresponds to 281–292; sequence ENKMKDARGFPT. The chain crosses the membrane as a helical span at residues 293–313; sequence ILSLGMSIITTLYIAIGALGY. Topologically, residues 314–340 are extracellular; sequence LRFGDDIKASITLNLPNCWLYQSVKLL. Residues 341–361 traverse the membrane as a helical segment; it reads YVVGILCTYALQFYVPAEIII. At 362–374 the chain is on the cytoplasmic side; the sequence is PLAVSQVSKRWAL. A helical membrane pass occupies residues 375 to 395; that stretch reads PVDLSIRLALVCLTCMLAILI. The Extracellular portion of the chain corresponds to 396–399; the sequence is PRLD. Residues 400–420 form a helical membrane-spanning segment; sequence LVLSLVGSVSSSALALIIPPL. Residues 421–441 are Cytoplasmic-facing; that stretch reads LEVVTYYGEGISPLTVTKDAL. Residues 442–462 form a helical membrane-spanning segment; sequence ISILGFMGFVVGTYQALDELI. At 463-478 the chain is on the extracellular side; sequence KSGNSPALSNSTMFIQ.

It belongs to the amino acid/polyamine transporter 2 family. Expressed in spinal cord, brain, testis, lung, heart, colon, spleen, kidney and muscle. Found in neuronal cell bodies in the anterior horn, in spinal cord brain stem, cerebellum, hippocampus, hypothalamus, rhinencephalon, cerebral cortex, and olfactory bulb in the brain. Also expressed in bone and fat tissues.

It localises to the cell membrane. The protein resides in the endoplasmic reticulum membrane. Its subcellular location is the recycling endosome membrane. The catalysed reaction is glycine(in) + H(+)(in) = glycine(out) + H(+)(out). It carries out the reaction L-alanine(in) + H(+)(in) = L-alanine(out) + H(+)(out). The enzyme catalyses D-alanine(in) + H(+)(in) = D-alanine(out) + H(+)(out). It catalyses the reaction L-proline(out) + H(+)(out) = L-proline(in) + H(+)(in). The catalysed reaction is D-proline(out) + H(+)(out) = D-proline(in) + H(+)(in). It carries out the reaction 4-hydroxy-L-proline(in) + H(+)(in) = 4-hydroxy-L-proline(out) + H(+)(out). The enzyme catalyses L-serine(in) + H(+)(in) = L-serine(out) + H(+)(out). It catalyses the reaction D-serine(out) + H(+)(out) = D-serine(in) + H(+)(in). The catalysed reaction is beta-alanine(in) + H(+)(in) = beta-alanine(out) + H(+)(out). It carries out the reaction 4-aminobutanoate(in) + H(+)(in) = 4-aminobutanoate(out) + H(+)(out). The enzyme catalyses sarcosine(in) + H(+)(in) = sarcosine(out) + H(+)(out). It catalyses the reaction N,N-dimethylglycine(in) + H(+)(in) = N,N-dimethylglycine(out) + H(+)(out). Functionally, electrogenic proton/amino acid symporter with a high selectivity for the small side chains amino acids glycine, alanine and proline, where both L- and D-enantiomers are transported. Extension of the backbone length, as in beta-alanine and 4-aminobutanoate or methylation of the amino group, as in sarcosine and N,N-dimethylglycine, are also tolerated but decrease transport efficiency. A free carboxyl group is preferred. This Mus musculus (Mouse) protein is Proton-coupled amino acid transporter 2.